The primary structure comprises 294 residues: FAD-dependent monooxygenase SAT1 (294 aa).

Asp108 provides a ligand contact to FAD.

Belongs to the paxM FAD-dependent monooxygenase family. FAD is required as a cofactor.

Its pathway is mycotoxin biosynthesis. In terms of biological role, FAD-dependent monooxygenase; part of the satratoxin SC1 cluster involved in the biosynthesis of satratoxins, trichothecene mycotoxins that are associated with human food poisonings. Satratoxins are suggested to be made by products of multiple gene clusters (SC1, SC2 and SC3) that encode 21 proteins in all, including polyketide synthases, acetyltransferases, and other enzymes expected to modify the trichothecene skeleton. SC1 encodes 10 proteins, SAT1 to SAT10. The largest are SAT8, which encodes a putative polyketide synthase (PKS) with a conventional non-reducing architecture, and SAT10, a putative protein containing four ankyrin repeats and thus may be involved in protein scaffolding. The putative short-chain reductase SAT3 may assist the PKS in some capacity. SAT6 contains a secretory lipase domain and acts probably as a trichothecene esterase. SAT5 encodes a putative acetyltransferase, and so, with SAT6, may affect endogenous protection from toxicity. The probable transcription factor SAT9 may regulate the expression of the SC1 cluster. SC2 encodes proteins SAT11 to SAT16, the largest of which encodes the putative reducing PKS SAT13. SAT11 is a cytochrome P450 monooxygenase, while SAT14 and SAT16 are probable acetyltransferases. The SC2 cluster may be regulated by the transcription factor SAT15. SC3 is a small cluster that encodes 5 proteins, SAT17 to SAT21. SAT21 is a putative MFS-type transporter which may have a role in exporting secondary metabolites. The four other proteins putatively encoded in SC3 include the taurine hydroxylase-like protein SAT17, the O-methyltransferase SAT18, the acetyltransferase SAT19, and the Cys6-type zinc finger SAT20, the latter being probably involved in regulation of SC3 expression. The chain is FAD-dependent monooxygenase SAT1 from Stachybotrys chartarum (strain CBS 109288 / IBT 7711) (Toxic black mold).